A 392-amino-acid polypeptide reads, in one-letter code: MAFLKLTEQNVQGKTVLIRADMNVPFKDGKISDDTRIRASIASVKYCVDNGASVIVMTHLGRPTEGEFHPEDDVAPVAAHLGSLLGKDVKVLNDWRENKPALNAGDVVMLQNVRINKGEKKNDLELGKAYASLCDVFVNDAFGTAHRAQASTEAVAQAAPVACAGVLMAGELDALGKALKQPARPMVAIVAGSKVSTKLTILESLADKVDQLIVGGGIANTFLLAEGKAIGKSLAEHDLVEESKKIMAKMAAKGGSVPLPTDVVVAKAFAADAEAVVKDIADVAEDDMILDIGPKSAAALADLLKAADTVVWNGPVGVFEFDQFAGGTKALAEAIAQSKAFSIAGGGDTLAAIAKFGVTEQIGYISTGGGAFLEFLEGKELPAVAALEKRGA.

Substrate-binding positions include 21–23 (DMN), R36, 59–62 (HLGR), R114, and R147. Residues K198, E320, and 346–349 (GGDT) contribute to the ATP site.

It belongs to the phosphoglycerate kinase family. In terms of assembly, monomer.

Its subcellular location is the cytoplasm. It carries out the reaction (2R)-3-phosphoglycerate + ATP = (2R)-3-phospho-glyceroyl phosphate + ADP. It participates in carbohydrate degradation; glycolysis; pyruvate from D-glyceraldehyde 3-phosphate: step 2/5. This is Phosphoglycerate kinase from Neisseria meningitidis serogroup A / serotype 4A (strain DSM 15465 / Z2491).